The following is a 173-amino-acid chain: NAD(P)H-quinone oxidoreductase subunit J (173 aa).

Belongs to the complex I 30 kDa subunit family. NDH-1 can be composed of about 15 different subunits; different subcomplexes with different compositions have been identified which probably have different functions.

Its subcellular location is the cellular thylakoid membrane. The enzyme catalyses a plastoquinone + NADH + (n+1) H(+)(in) = a plastoquinol + NAD(+) + n H(+)(out). It carries out the reaction a plastoquinone + NADPH + (n+1) H(+)(in) = a plastoquinol + NADP(+) + n H(+)(out). Its function is as follows. NDH-1 shuttles electrons from an unknown electron donor, via FMN and iron-sulfur (Fe-S) centers, to quinones in the respiratory and/or the photosynthetic chain. The immediate electron acceptor for the enzyme in this species is believed to be plastoquinone. Couples the redox reaction to proton translocation, and thus conserves the redox energy in a proton gradient. Cyanobacterial NDH-1 also plays a role in inorganic carbon-concentration. The polypeptide is NAD(P)H-quinone oxidoreductase subunit J (Prochlorococcus marinus (strain NATL1A)).